A 491-amino-acid polypeptide reads, in one-letter code: Immediate early protein IE1 (491 aa).

Over residues 1-11 (MESSAKRKMDP) the composition is skewed to basic and acidic residues. Residues 1–24 (MESSAKRKMDPDNPDEGPSSKVPR) are nuclear localization signal. The tract at residues 1 to 30 (MESSAKRKMDPDNPDEGPSSKVPRPETPVT) is disordered. An interaction with host PML, interference with PML sumoylation and disruption of PML-associated nuclear bodies region spans residues 132–346 (ILDKVHEPFE…SVMKRRIEEI (215 aa)). The interaction with host STAT2 stretch occupies residues 373–445 (AIAEESDEEE…EEGAQEERED (73 aa)). The interval 410–420 (ATIPLSSVIVA) is modulation of STAT3/STAT1 signaling. Residues 410-445 (ATIPLSSVIVAENSDQEESEQSDEEEEEGAQEERED) form an interaction with host STAT3 region. The tract at residues 421–472 (ENSDQEESEQSDEEEEEGAQEEREDTVSVKSEPVSEIEEVAPEEEEDGAEEP) is acidic. Residues 421-491 (ENSDQEESEQ…PMVTRSKADQ (71 aa)) are disordered. Residues 423-444 (SDQEESEQSDEEEEEGAQEERE) show a composition bias toward acidic residues. Residues 449–452 (VKSE) are interaction with host SUMO1. Residue K450 forms a Glycyl lysine isopeptide (Lys-Gly) (interchain with G-Cter in SUMO) linkage. Acidic residues predominate over residues 455-470 (SEIEEVAPEEEEDGAE). Residues 475–491 (SGGKSTHPMVTRSKADQ) form a chromosome-tethering domain (CTD), binding to histones region.

It belongs to the HHV-5 IE1 protein family. As to quaternary structure, forms homodimers. Interacts with human p53/TP53; this interaction inhibits p53/TP53-dependent transactivation activity. Interacts with host STAT1. Interacts with host STAT2; this interaction promotes viral growth and counteracts the antiviral interferon response. May also interact with the host STAT1-STAT2 heterodimer. Interacts with host STAT3; this interaction leads to STAT3 nuclear accumulation and disruption of IL6-induced STAT3 phosphorylation. Interacts with host PML; this interaction inhibits host PML de novo sumoylation and probably inhibits PML regulation of type I and type II interferon-induced gene expression. Interacts with host DAXX. Interacts with host SP100. Interacts with host E2F1. Interacts with host RB1. Interacts with host HDAC1; this interaction inhibits histone deacetylation and promotes viral transcription. Interacts with host HDAC2; this interaction inhibits histone deacetylation and promotes viral transcription. Interacts with host HDAC3; this interaction inhibits histone deacetylation and promotes viral transcription. Interacts with host PLSCR1; this interaction inhibits IE1 transactivating activity. Post-translationally, sumoylated by host PML. Sumoylation abolishes the interaction with host STAT2 and thus the IE1-mediated repression of interferon-stimulated genes.

It is found in the host nucleus. In terms of biological role, plays an important role in transactivating viral early genes as well as activating its own promoter, probably by altering the viral chromatin structure. Expression of IE1 and IE2 proteins is critical for the establishment of lytic infection and reactivation from viral latency. Disrupts PML-associated ND10 nuclear bodies by interfering with host PML and SP100 sumoylation thereby altering the regulation of type I and type II interferon-induced gene expression. Promotes efficient viral growth by interacting with and directing host SP100 to degradation, leading to enhanced acetylation level of histones. In addition, functions in counteracting the host innate antiviral response. Inhibits the type I interferon pathway by directly interacting with and sequestrating host STAT2. Also targets type II interferon pathway by repressing IL6- and STAT3 target genes. Repression of STAT3 genes is due to STAT3 nuclear accumulation and disruption of IL6-induced STAT3 phosphorylation by IE1. This repression is followed by phosphorylation and activation of STAT1. Inhibits host ISG transcription by sequestering host ISGF3 in a PML- and STAT2- binding dependent manner. Alters host cell cycle progression, probably through its interaction with host E2F1 or RB1 that overcomes the RB1-mediated repression of E2F-responsive promoters. This chain is Immediate early protein IE1 (UL123), found in Human cytomegalovirus (strain AD169) (HHV-5).